The primary structure comprises 176 residues: 2-C-methyl-D-erythritol 2,4-cyclodiphosphate synthase (176 aa).

A divalent metal cation contacts are provided by aspartate 23, histidine 25, and histidine 60. Position 23–25 (23–25) interacts with 4-CDP-2-C-methyl-D-erythritol 2-phosphate; it reads DSH. A 4-CDP-2-C-methyl-D-erythritol 2-phosphate-binding site is contributed by 149–152; that stretch reads TSGE.

It belongs to the IspF family. In terms of assembly, homotrimer. It depends on a divalent metal cation as a cofactor.

The enzyme catalyses 4-CDP-2-C-methyl-D-erythritol 2-phosphate = 2-C-methyl-D-erythritol 2,4-cyclic diphosphate + CMP. It functions in the pathway isoprenoid biosynthesis; isopentenyl diphosphate biosynthesis via DXP pathway; isopentenyl diphosphate from 1-deoxy-D-xylulose 5-phosphate: step 4/6. Involved in the biosynthesis of isopentenyl diphosphate (IPP) and dimethylallyl diphosphate (DMAPP), two major building blocks of isoprenoid compounds. Catalyzes the conversion of 4-diphosphocytidyl-2-C-methyl-D-erythritol 2-phosphate (CDP-ME2P) to 2-C-methyl-D-erythritol 2,4-cyclodiphosphate (ME-CPP) with a corresponding release of cytidine 5-monophosphate (CMP). The protein is 2-C-methyl-D-erythritol 2,4-cyclodiphosphate synthase of Chlamydia felis (strain Fe/C-56) (Chlamydophila felis).